The following is a 548-amino-acid chain: Sesquiterpene synthase TPS1 (548 aa).

The (2E,6E)-farnesyl diphosphate site is built by R264, D301, D305, R442, and D445. Mg(2+)-binding residues include D301 and D305. Positions 301–305 match the DDXXD motif motif; that stretch reads DDTYD. Mg(2+)-binding residues include D445 and E453.

The protein belongs to the terpene synthase family. Tpsa subfamily. In terms of assembly, monomer. Mg(2+) is required as a cofactor. In terms of tissue distribution, expressed in leaves and stems.

The protein localises to the cytoplasm. It carries out the reaction (2E,6E)-farnesyl diphosphate = germacrene D + diphosphate. The enzyme catalyses (2E,6E)-farnesyl diphosphate = (-)-(E)-beta-caryophyllene + diphosphate. The catalysed reaction is (2E,6E)-farnesyl diphosphate = beta-copaene + diphosphate. Its pathway is secondary metabolite biosynthesis; terpenoid biosynthesis. Functionally, sesquiterpene synthase involved in the biosynthesis of volatile compounds. Mediates the conversion of (2E,6E)-farnesyl diphosphate (FPP) into germacrene D, (-)-(E)-beta-caryophyllene and beta-copaene. This is Sesquiterpene synthase TPS1 from Xanthium strumarium (Rough cocklebur).